The primary structure comprises 251 residues: Triosephosphate isomerase (251 aa).

8–10 is a binding site for substrate; the sequence is NWK. Histidine 97 functions as the Electrophile in the catalytic mechanism. Catalysis depends on glutamate 170, which acts as the Proton acceptor. Substrate-binding positions include glycine 176, serine 215, and 236 to 237; that span reads GG.

The protein belongs to the triosephosphate isomerase family. As to quaternary structure, homodimer.

It localises to the cytoplasm. It carries out the reaction D-glyceraldehyde 3-phosphate = dihydroxyacetone phosphate. It functions in the pathway carbohydrate biosynthesis; gluconeogenesis. It participates in carbohydrate degradation; glycolysis; D-glyceraldehyde 3-phosphate from glycerone phosphate: step 1/1. Involved in the gluconeogenesis. Catalyzes stereospecifically the conversion of dihydroxyacetone phosphate (DHAP) to D-glyceraldehyde-3-phosphate (G3P). This Nitratidesulfovibrio vulgaris (strain ATCC 29579 / DSM 644 / CCUG 34227 / NCIMB 8303 / VKM B-1760 / Hildenborough) (Desulfovibrio vulgaris) protein is Triosephosphate isomerase.